The sequence spans 365 residues: MKTTISVIKADVGSVAGHAVAHEALKKKCDEILAEARDTGILEDYYITNCGDDIDLIMTHRNGEENEEVHQTAWNAFREATEVARGLKLYGAGQDLLSDTFSGNIKGMGPGCAEMEFKERPSDPVIIFCCDKTEPGAFNLPLFRMFADPFNTAGLVIDPTLHNGYEFEVFDVVEHKKVTMACPDEMYDLLALLGSISRYVIKKIHRRDDGEIAASVSTERLNLMAGKYIGKDDPVAIVRAQSGFPAAGEVVEPFAFPHLVGGWMRGSHNGPLMPVAQRDATPVRFDGPPRVIGLGFQIADCKLVGPIDMFDDPSFDRSRQLASEIAEYMRRHGPFEPHRLPSDEMEYTSLPGVLEKLGDRFEDMD.

Asp11 (proton acceptor; for FBP phosphatase activity) is an active-site residue. 4 residues coordinate Mg(2+): Asp11, His18, Asp52, and Asp53. His18 provides a ligand contact to beta-D-fructose 1,6-bisphosphate. Dihydroxyacetone phosphate is bound at residue His18. Tyr90 lines the beta-D-fructose 1,6-bisphosphate pocket. Residue Gln94 participates in Mg(2+) binding. 103-104 (GN) is a binding site for beta-D-fructose 1,6-bisphosphate. Residue Asp131 coordinates Mg(2+). Lys132 contributes to the beta-D-fructose 1,6-bisphosphate binding site. Position 132 (Lys132) interacts with dihydroxyacetone phosphate. Tyr228 acts as the Proton donor/acceptor; for FBP aldolase activity in catalysis. Mg(2+)-binding residues include Lys231, Asp232, and Asp233. The Schiff-base intermediate with DHAP; for FBP aldolase activity role is filled by Lys231. Residues 241 to 242 (QS), Arg265, Asp286, and Tyr347 contribute to the beta-D-fructose 1,6-bisphosphate site. The dihydroxyacetone phosphate site is built by Arg265 and Asp286.

It belongs to the FBP aldolase/phosphatase family. As to quaternary structure, homooctamer; dimer of tetramers. The cofactor is Mg(2+).

The catalysed reaction is beta-D-fructose 1,6-bisphosphate + H2O = beta-D-fructose 6-phosphate + phosphate. It catalyses the reaction beta-D-fructose 1,6-bisphosphate = D-glyceraldehyde 3-phosphate + dihydroxyacetone phosphate. It participates in carbohydrate biosynthesis; gluconeogenesis. In terms of biological role, catalyzes two subsequent steps in gluconeogenesis: the aldol condensation of dihydroxyacetone phosphate (DHAP) and glyceraldehyde-3-phosphate (GA3P) to fructose-1,6-bisphosphate (FBP), and the dephosphorylation of FBP to fructose-6-phosphate (F6P). The sequence is that of Fructose-1,6-bisphosphate aldolase/phosphatase from Methanothermobacter marburgensis (strain ATCC BAA-927 / DSM 2133 / JCM 14651 / NBRC 100331 / OCM 82 / Marburg) (Methanobacterium thermoautotrophicum).